The following is a 560-amino-acid chain: Dihydroxy-acid dehydratase (560 aa).

Cysteine 50 serves as a coordination point for [2Fe-2S] cluster. Aspartate 82 is a binding site for Mg(2+). Cysteine 123 provides a ligand contact to [2Fe-2S] cluster. The Mg(2+) site is built by aspartate 124 and lysine 125. An N6-carboxylysine modification is found at lysine 125. Cysteine 195 provides a ligand contact to [2Fe-2S] cluster. Glutamate 447 is a Mg(2+) binding site. Catalysis depends on serine 473, which acts as the Proton acceptor.

This sequence belongs to the IlvD/Edd family. In terms of assembly, homodimer. It depends on [2Fe-2S] cluster as a cofactor. The cofactor is Mg(2+).

It carries out the reaction (2R)-2,3-dihydroxy-3-methylbutanoate = 3-methyl-2-oxobutanoate + H2O. It catalyses the reaction (2R,3R)-2,3-dihydroxy-3-methylpentanoate = (S)-3-methyl-2-oxopentanoate + H2O. It participates in amino-acid biosynthesis; L-isoleucine biosynthesis; L-isoleucine from 2-oxobutanoate: step 3/4. It functions in the pathway amino-acid biosynthesis; L-valine biosynthesis; L-valine from pyruvate: step 3/4. Functionally, functions in the biosynthesis of branched-chain amino acids. Catalyzes the dehydration of (2R,3R)-2,3-dihydroxy-3-methylpentanoate (2,3-dihydroxy-3-methylvalerate) into 2-oxo-3-methylpentanoate (2-oxo-3-methylvalerate) and of (2R)-2,3-dihydroxy-3-methylbutanoate (2,3-dihydroxyisovalerate) into 2-oxo-3-methylbutanoate (2-oxoisovalerate), the penultimate precursor to L-isoleucine and L-valine, respectively. The sequence is that of Dihydroxy-acid dehydratase from Thermosynechococcus vestitus (strain NIES-2133 / IAM M-273 / BP-1).